We begin with the raw amino-acid sequence, 203 residues long: dITP/XTP pyrophosphatase (203 aa).

9–14 (SSNAGK) lines the substrate pocket. 2 residues coordinate Mg(2+): E42 and D72. D72 serves as the catalytic Proton acceptor. Substrate is bound by residues S73, 161 to 164 (FGYD), K184, and 189 to 190 (HR).

It belongs to the HAM1 NTPase family. In terms of assembly, homodimer. The cofactor is Mg(2+).

The enzyme catalyses XTP + H2O = XMP + diphosphate + H(+). It catalyses the reaction dITP + H2O = dIMP + diphosphate + H(+). The catalysed reaction is ITP + H2O = IMP + diphosphate + H(+). In terms of biological role, pyrophosphatase that catalyzes the hydrolysis of nucleoside triphosphates to their monophosphate derivatives, with a high preference for the non-canonical purine nucleotides XTP (xanthosine triphosphate), dITP (deoxyinosine triphosphate) and ITP. Seems to function as a house-cleaning enzyme that removes non-canonical purine nucleotides from the nucleotide pool, thus preventing their incorporation into DNA/RNA and avoiding chromosomal lesions. The polypeptide is dITP/XTP pyrophosphatase (Acidobacterium capsulatum (strain ATCC 51196 / DSM 11244 / BCRC 80197 / JCM 7670 / NBRC 15755 / NCIMB 13165 / 161)).